A 304-amino-acid polypeptide reads, in one-letter code: Zinc carboxypeptidase (304 aa).

Residues Q1–S294 form the Peptidase M14 domain. Residues H58 and E61 each coordinate Zn(2+). C125 and C148 are disulfide-bonded. Zn(2+) is bound at residue H184. Catalysis depends on E259, which acts as the Proton donor/acceptor.

Belongs to the peptidase M14 family. Zn(2+) is required as a cofactor. As to expression, gut specific.

The protein resides in the secreted. Involved in the digestion of the blood meal. The sequence is that of Zinc carboxypeptidase from Simulium vittatum (Striped black fly).